The primary structure comprises 102 residues: Large ribosomal subunit protein bL21 (102 aa).

This sequence belongs to the bacterial ribosomal protein bL21 family. Part of the 50S ribosomal subunit. Contacts protein L20.

Its function is as follows. This protein binds to 23S rRNA in the presence of protein L20. This is Large ribosomal subunit protein bL21 from Azorhizobium caulinodans (strain ATCC 43989 / DSM 5975 / JCM 20966 / LMG 6465 / NBRC 14845 / NCIMB 13405 / ORS 571).